The sequence spans 146 residues: Hemoglobin subunit beta (146 aa).

The 145-residue stretch at 2 to 146 (HWTETERATI…VVAALSREYH (145 aa)) folds into the Globin domain. Positions 63 and 92 each coordinate heme b.

It belongs to the globin family. Heterotetramer of two alpha chains and two beta chains (an easy dimerization is also reported). Red blood cells.

Functionally, involved in oxygen transport from the lung to the various peripheral tissues. In Latimeria chalumnae (Coelacanth), this protein is Hemoglobin subunit beta (HBB).